Consider the following 71-residue polypeptide: Small ribosomal subunit protein bS18 (71 aa).

Belongs to the bacterial ribosomal protein bS18 family. Part of the 30S ribosomal subunit. Forms a tight heterodimer with protein bS6.

Its function is as follows. Binds as a heterodimer with protein bS6 to the central domain of the 16S rRNA, where it helps stabilize the platform of the 30S subunit. The chain is Small ribosomal subunit protein bS18 from Acaryochloris marina (strain MBIC 11017).